The following is a 100-amino-acid chain: MISEERLLKVILAPHISEKSTVNAEKNNTVVFRVAIDATKAEVKAAVAQLFEVEVDSVRTLVNKGKTKRTGARTGRRSDWKKAYVTLAEGADIDFVGGAE.

The protein belongs to the universal ribosomal protein uL23 family. As to quaternary structure, part of the 50S ribosomal subunit. Contacts protein L29, and trigger factor when it is bound to the ribosome.

Functionally, one of the early assembly proteins it binds 23S rRNA. One of the proteins that surrounds the polypeptide exit tunnel on the outside of the ribosome. Forms the main docking site for trigger factor binding to the ribosome. This Shewanella halifaxensis (strain HAW-EB4) protein is Large ribosomal subunit protein uL23.